The primary structure comprises 272 residues: Putative imidazole glycerol phosphate synthase subunit hisF2 (272 aa).

Asp133 is an active-site residue.

This sequence belongs to the HisA/HisF family. As to quaternary structure, heterodimer of HisH and HisF.

It is found in the cytoplasm. It carries out the reaction 5-[(5-phospho-1-deoxy-D-ribulos-1-ylimino)methylamino]-1-(5-phospho-beta-D-ribosyl)imidazole-4-carboxamide + L-glutamine = D-erythro-1-(imidazol-4-yl)glycerol 3-phosphate + 5-amino-1-(5-phospho-beta-D-ribosyl)imidazole-4-carboxamide + L-glutamate + H(+). It participates in amino-acid biosynthesis; L-histidine biosynthesis; L-histidine from 5-phospho-alpha-D-ribose 1-diphosphate: step 5/9. In terms of biological role, IGPS catalyzes the conversion of PRFAR and glutamine to IGP, AICAR and glutamate. The HisF subunit catalyzes the cyclization activity that produces IGP and AICAR from PRFAR using the ammonia provided by the HisH subunit. This chain is Putative imidazole glycerol phosphate synthase subunit hisF2 (hisF2), found in Vibrio vulnificus (strain YJ016).